An 81-amino-acid polypeptide reads, in one-letter code: Photosystem I iron-sulfur center (81 aa).

4Fe-4S ferredoxin-type domains lie at 2–31 (SHSV…MIPW) and 39–68 (IASA…VRVY). Residues Cys11, Cys14, Cys17, Cys21, Cys48, Cys51, Cys54, and Cys58 each contribute to the [4Fe-4S] cluster site.

The eukaryotic PSI reaction center is composed of at least 11 subunits. [4Fe-4S] cluster serves as cofactor.

Its subcellular location is the plastid. The protein resides in the chloroplast thylakoid membrane. It carries out the reaction reduced [plastocyanin] + hnu + oxidized [2Fe-2S]-[ferredoxin] = oxidized [plastocyanin] + reduced [2Fe-2S]-[ferredoxin]. Functionally, apoprotein for the two 4Fe-4S centers FA and FB of photosystem I (PSI); essential for photochemical activity. FB is the terminal electron acceptor of PSI, donating electrons to ferredoxin. The C-terminus interacts with PsaA/B/D and helps assemble the protein into the PSI complex. Required for binding of PsaD and PsaE to PSI. PSI is a plastocyanin-ferredoxin oxidoreductase, converting photonic excitation into a charge separation, which transfers an electron from the donor P700 chlorophyll pair to the spectroscopically characterized acceptors A0, A1, FX, FA and FB in turn. The polypeptide is Photosystem I iron-sulfur center (Phaseolus vulgaris (Kidney bean)).